Here is a 109-residue protein sequence, read N- to C-terminus: Large ribosomal subunit protein uL23 (109 aa).

Belongs to the universal ribosomal protein uL23 family. In terms of assembly, part of the 50S ribosomal subunit. Contacts protein L29, and trigger factor when it is bound to the ribosome.

In terms of biological role, one of the early assembly proteins it binds 23S rRNA. One of the proteins that surrounds the polypeptide exit tunnel on the outside of the ribosome. Forms the main docking site for trigger factor binding to the ribosome. In Aquifex pyrophilus, this protein is Large ribosomal subunit protein uL23.